The sequence spans 177 residues: CDP-archaeol synthase (177 aa).

5 helical membrane-spanning segments follow: residues 6–26, 54–74, 90–110, 124–144, and 148–168; these read LFAS…ACIF, CIFG…LVDF, VILA…GSFI, LLDQ…VAPI, and MIII…IIAY.

Belongs to the CDP-archaeol synthase family. Mg(2+) serves as cofactor.

It localises to the cell membrane. It catalyses the reaction 2,3-bis-O-(geranylgeranyl)-sn-glycerol 1-phosphate + CTP + H(+) = CDP-2,3-bis-O-(geranylgeranyl)-sn-glycerol + diphosphate. The protein operates within membrane lipid metabolism; glycerophospholipid metabolism. Its function is as follows. Catalyzes the formation of CDP-2,3-bis-(O-geranylgeranyl)-sn-glycerol (CDP-archaeol) from 2,3-bis-(O-geranylgeranyl)-sn-glycerol 1-phosphate (DGGGP) and CTP. This reaction is the third ether-bond-formation step in the biosynthesis of archaeal membrane lipids. This is CDP-archaeol synthase from Methanocaldococcus jannaschii (strain ATCC 43067 / DSM 2661 / JAL-1 / JCM 10045 / NBRC 100440) (Methanococcus jannaschii).